The primary structure comprises 440 residues: Ran-specific GTPase-activating protein 30 (440 aa).

The RanBD1 domain occupies 1–314; that stretch reads MDEILAKAGS…LVLKIDRSDD (314 aa). At Thr272 the chain carries Phosphothreonine. Positions 341–371 are enriched in acidic residues; that stretch reads IEEDEEEDEEEDEEEGKDGEERKEEEEEENK. The disordered stretch occupies residues 341-375; the sequence is IEEDEEEDEEEDEEEGKDGEERKEEEEEENKLEDK.

Interacts with GSP1.

The protein localises to the cytoplasm. Its subcellular location is the nucleus. Functionally, important for the export of protein containing nuclear export signal (NES) out of the nucleus. Stimulates the GTPase activity of GSP1. The sequence is that of Ran-specific GTPase-activating protein 30 (YRB30) from Saccharomyces cerevisiae (strain ATCC 204508 / S288c) (Baker's yeast).